The following is a 79-amino-acid chain: Protein NOI4 (79 aa).

Residues 31-68 (KARDEKKTGGKPGSPGKSSEGHVKSGGGDPSKPQPKKW) form a disordered region. A Phosphoserine modification is found at S44.

The protein belongs to the RIN4 family. Proteolytic cleaved by P.syringae pv tomato AvrRpt2 after Gly-12; this cleavage is critical for subsequent proteasome-dependent elimination.

This Arabidopsis thaliana (Mouse-ear cress) protein is Protein NOI4.